A 70-amino-acid polypeptide reads, in one-letter code: Guanine nucleotide-binding protein G(I)/G(S)/G(O) subunit gamma-8 (70 aa).

A Cysteine methyl ester modification is found at Cys-67. Cys-67 carries S-geranylgeranyl cysteine lipidation. Positions 68–70 are cleaved as a propeptide — removed in mature form; the sequence is VLL.

The protein belongs to the G protein gamma family. As to quaternary structure, g proteins are composed of 3 units, alpha, beta and gamma.

The protein resides in the cell membrane. Functionally, guanine nucleotide-binding proteins (G proteins) are involved as a modulator or transducer in various transmembrane signaling systems. The beta and gamma chains are required for the GTPase activity, for replacement of GDP by GTP, and for G protein-effector interaction. This Homo sapiens (Human) protein is Guanine nucleotide-binding protein G(I)/G(S)/G(O) subunit gamma-8 (GNG8).